Reading from the N-terminus, the 273-residue chain is MNSDSSSVSSRASSPDMDEMYLRDHHHRHHHHHQESRLNSVSSTQGDMVQKMPGESLSRAGAKAAGESSKYKIKKQLSEQDLQQLRLKINGRERKRMHDLNLAMDGLREVMPYAHGPSVRKLSKIATLLLARNYILMLTSSLEEMKRLVGEIYGGHHSAFHCGTVGHSAGHPAHAANAVHPVHPILGGALSSGNASSPLSATSLPTIGTIRPPHSLLKAPSTPPALQLGSGFQHWAGLPCPCTICQMPPPPHLSALSTANMARLSAESKDLLK.

Positions 1-14 are enriched in low complexity; it reads MNSDSSSVSSRASS. The disordered stretch occupies residues 1 to 72; sequence MNSDSSSVSS…KAAGESSKYK (72 aa). Positions 24–34 are enriched in basic residues; sequence DHHHRHHHHHQ. The segment covering 37–47 has biased composition (polar residues); sequence RLNSVSSTQGD. A coiled-coil region spans residues 69 to 90; the sequence is SKYKIKKQLSEQDLQQLRLKIN. The bHLH domain maps to 84-138; sequence QLRLKINGRERKRMHDLNLAMDGLREVMPYAHGPSVRKLSKIATLLLARNYILML.

In terms of tissue distribution, weakly expressed, mainly in non-neural tissues.

The protein localises to the nucleus. Functionally, may determine the distinct specification program of class A neurons in the dorsal part of the spinal cord and suppress specification of class B neurons. This is Oligodendrocyte transcription factor 3 (Olig3) from Mus musculus (Mouse).